Reading from the N-terminus, the 315-residue chain is Olfactory receptor 3A2 (315 aa).

Over 1–29 (MEPEAGTNRTAVAEFILLGLVQTEEMQPV) the chain is Extracellular. A glycan (N-linked (GlcNAc...) asparagine) is linked at Asn8. A helical transmembrane segment spans residues 30–52 (VFVLFLFAYLVTIGGNLSILAAI). Topologically, residues 53-60 (LVEPKLHA) are cytoplasmic. Residues 61–82 (PMYFFLGNLSVLDVGCITVTVP) form a helical membrane-spanning segment. Residues 83 to 103 (AMLGRLLSHKSTISYDACLSQ) are Extracellular-facing. A disulfide bridge links Cys100 with Cys192. The helical transmembrane segment at 104–123 (LFFFHLLAGMDCFLLTAMAY) threads the bilayer. The Cytoplasmic segment spans residues 124-143 (DRFLAICWPLTYSTRMSQTV). A helical transmembrane segment spans residues 144 to 161 (QRMLVAASWACAFTNALT). Residues 162-199 (HTVAMSTLNFCGPNEVNHFYCDLPQLFQLSCSSTQLNE) lie on the Extracellular side of the membrane. The helical transmembrane segment at 200-223 (LLLFAVGFIMAGTPLVLIITSYSH) threads the bilayer. The Cytoplasmic portion of the chain corresponds to 224–240 (VAAAVLRIRSVEGWKKA). Residues 241 to 264 (FSTCGSHLTVVCLFFGTGIFNYMR) traverse the membrane as a helical segment. Over 265–275 (LGSEEASDKDK) the chain is Extracellular. The chain crosses the membrane as a helical span at residues 276-295 (GVGVFNTVINPMLNPLIYSL). The Cytoplasmic portion of the chain corresponds to 296–315 (RNPDVQGALWRIFLGRRSLT).

This sequence belongs to the G-protein coupled receptor 1 family.

It localises to the cell membrane. Functionally, odorant receptor. The protein is Olfactory receptor 3A2 (OR3A2) of Pan troglodytes (Chimpanzee).